The sequence spans 83 residues: Snake venom metalloproteinase BnP1 (83 aa).

One can recognise a Peptidase M12B domain in the interval 8 to 83; it reads SYIELAVVAD…NPQCIINQPI (76 aa). Ca(2+) is bound by residues E11, C77, and N80.

It belongs to the venom metalloproteinase (M12B) family. P-I subfamily. Monomer. Requires Zn(2+) as cofactor. As to expression, expressed by the venom gland.

It is found in the secreted. Inhibited by EDTA. This protein is a zinc protease from snake venom that is devoid of significant myotoxic and hemorrhagic activities. It hydrolyzes the Aalpha-chain and more slowly the Bbeta-chain of fibrin and fibrinogen, without affecting the gamma-chains. It induces cell detachment and a apoptosis (anoikis) in endothelial cells. The protein is Snake venom metalloproteinase BnP1 of Bothrops pauloensis (Neuwied's lancehead).